The sequence spans 195 residues: MTEVVAREVYYCGVCSFPPEYCEFGVSLKRCKDWLQDNNQELFDKIYSDDALATQTSTLSIERQEKISQELAKKQLKEEAKQERELQKKLASKVLIKRIERNRRKHIISISGLEVFNIDMKKLAKTFASKFATGASVTKTADKKEEILVQGDVSDEAKEYIEKLLEEQGLNGVEVEQVDEKKKKKATAPGATPAA.

The region spanning 94–165 is the SUI1 domain; it reads VLIKRIERNR…EAKEYIEKLL (72 aa). Residues 176-195 are disordered; sequence EQVDEKKKKKATAPGATPAA.

Belongs to the DENR family. In terms of assembly, interacts with the 40S ribosomal subunit.

Its subcellular location is the cytoplasm. The chain is Translation machinery-associated protein 22 (TMA22) from Scheffersomyces stipitis (strain ATCC 58785 / CBS 6054 / NBRC 10063 / NRRL Y-11545) (Yeast).